Reading from the N-terminus, the 505-residue chain is Apolipoprotein N-acyltransferase (505 aa).

The next 6 helical transmembrane spans lie at 15 to 46 (AAFV…LLLL), 55 to 75 (ALIA…WVHV), 89 to 109 (LFLM…FGWL), 129 to 149 (LWLI…WLWL), 161 to 181 (FAPI…AGSL), and 192 to 212 (MACI…MQWV). One can recognise a CN hydrolase domain in the interval 225-471 (IQGNIEQGLK…TGVLKATVTP (247 aa)). Glu-264 acts as the Proton acceptor in catalysis. Lys-330 is a catalytic residue. The active-site Nucleophile is Cys-382. A helical transmembrane segment spans residues 479 to 499 (FLWGTTPLYLWVGLAAGFAFW).

Belongs to the CN hydrolase family. Apolipoprotein N-acyltransferase subfamily.

It localises to the cell inner membrane. It carries out the reaction N-terminal S-1,2-diacyl-sn-glyceryl-L-cysteinyl-[lipoprotein] + a glycerophospholipid = N-acyl-S-1,2-diacyl-sn-glyceryl-L-cysteinyl-[lipoprotein] + a 2-acyl-sn-glycero-3-phospholipid + H(+). It participates in protein modification; lipoprotein biosynthesis (N-acyl transfer). Catalyzes the phospholipid dependent N-acylation of the N-terminal cysteine of apolipoprotein, the last step in lipoprotein maturation. The polypeptide is Apolipoprotein N-acyltransferase (Vibrio cholerae serotype O1 (strain ATCC 39315 / El Tor Inaba N16961)).